A 297-amino-acid polypeptide reads, in one-letter code: uncharacterized protein (297 aa).

WD repeat units follow at residues 12–51, 54–93, 96–135, 140–177, 179–217, 222–261, and 265–297; these read KAKEPINVVKYNRTGKYVLAAGNERVVRLWNVKSGACIHE, GHGHEILDLDLVYDSTKFASCGGDKFIQVWDVNTGKVDRR, GHLAQINTIRYNEDSSILASGSFDSKVRLWDCRSNSFSPI, DAKDSVSSIDIAEHLIVTGSTDGTLRTYDIRKGTLSSD, FSHPITSVKTSKSASFSLISSLNSSIHLLDQETGKILKS, KNMEYRVRSSFNQSETIVFSGSEDGKVYLWDLENETQITS, and VGTPIVTDISCHPTMDDFIIATVHGDLFIYQYN.

This sequence belongs to the WD repeat MORG1 family.

The protein resides in the cytoplasm. It is found in the nucleus. This is an uncharacterized protein from Schizosaccharomyces pombe (strain 972 / ATCC 24843) (Fission yeast).